A 353-amino-acid polypeptide reads, in one-letter code: 3-isopropylmalate dehydrogenase (353 aa).

Residues Arg97, Arg107, Arg135, and Asp219 each coordinate substrate. The Mg(2+) site is built by Asp219, Asp243, and Asp247.

Belongs to the isocitrate and isopropylmalate dehydrogenases family. LeuB type 1 subfamily. In terms of assembly, homodimer. Requires Mg(2+) as cofactor. Mn(2+) is required as a cofactor.

Its subcellular location is the cytoplasm. It carries out the reaction (2R,3S)-3-isopropylmalate + NAD(+) = 4-methyl-2-oxopentanoate + CO2 + NADH. It participates in amino-acid biosynthesis; L-leucine biosynthesis; L-leucine from 3-methyl-2-oxobutanoate: step 3/4. Its function is as follows. Catalyzes the oxidation of 3-carboxy-2-hydroxy-4-methylpentanoate (3-isopropylmalate) to 3-carboxy-4-methyl-2-oxopentanoate. The product decarboxylates to 4-methyl-2 oxopentanoate. This is 3-isopropylmalate dehydrogenase from Bacteroides fragilis (strain ATCC 25285 / DSM 2151 / CCUG 4856 / JCM 11019 / LMG 10263 / NCTC 9343 / Onslow / VPI 2553 / EN-2).